A 118-amino-acid chain; its full sequence is Large ribosomal subunit protein uL18 (118 aa).

It belongs to the universal ribosomal protein uL18 family. In terms of assembly, part of the 50S ribosomal subunit; part of the 5S rRNA/L5/L18/L25 subcomplex. Contacts the 5S and 23S rRNAs.

In terms of biological role, this is one of the proteins that bind and probably mediate the attachment of the 5S RNA into the large ribosomal subunit, where it forms part of the central protuberance. The protein is Large ribosomal subunit protein uL18 of Myxococcus xanthus (strain DK1622).